The primary structure comprises 329 residues: DNA-directed RNA polymerase subunit alpha (329 aa).

The alpha N-terminal domain (alpha-NTD) stretch occupies residues 1–235 (MQGSVTEFLK…EQLDAFVDLR (235 aa)). An alpha C-terminal domain (alpha-CTD) region spans residues 249–329 (FDPILLRPVD…NWPPASIAED (81 aa)).

The protein belongs to the RNA polymerase alpha chain family. In terms of assembly, homodimer. The RNAP catalytic core consists of 2 alpha, 1 beta, 1 beta' and 1 omega subunit. When a sigma factor is associated with the core the holoenzyme is formed, which can initiate transcription.

The catalysed reaction is RNA(n) + a ribonucleoside 5'-triphosphate = RNA(n+1) + diphosphate. DNA-dependent RNA polymerase catalyzes the transcription of DNA into RNA using the four ribonucleoside triphosphates as substrates. The chain is DNA-directed RNA polymerase subunit alpha from Mannheimia succiniciproducens (strain KCTC 0769BP / MBEL55E).